A 267-amino-acid polypeptide reads, in one-letter code: Tryptophan synthase alpha chain (267 aa).

Catalysis depends on proton acceptor residues Glu-49 and Asp-60.

It belongs to the TrpA family. As to quaternary structure, tetramer of two alpha and two beta chains.

It catalyses the reaction (1S,2R)-1-C-(indol-3-yl)glycerol 3-phosphate + L-serine = D-glyceraldehyde 3-phosphate + L-tryptophan + H2O. Its pathway is amino-acid biosynthesis; L-tryptophan biosynthesis; L-tryptophan from chorismate: step 5/5. Its function is as follows. The alpha subunit is responsible for the aldol cleavage of indoleglycerol phosphate to indole and glyceraldehyde 3-phosphate. This is Tryptophan synthase alpha chain from Citrifermentans bemidjiense (strain ATCC BAA-1014 / DSM 16622 / JCM 12645 / Bem) (Geobacter bemidjiensis).